The following is a 596-amino-acid chain: MASTFTATSSLGSLLAPNAIKLSSATSISSSSFGRRHNVCVRRSRPAIVCAAKELHFNKDGTTIRKLQTGVNKLADLVGVTLGPKGRNVVLESKYGSPRIVNDGVTVAREVELEDPVENIGAKLVRQAAAKTNDLAGDGTTTSVVLAQGFIAEGVKVVAAGANPVLITRGIEKTAKALVNELKLMSKEVEDSELADVAAVSAGNNHEVGSMIAEAMSKVGRKGVVTLEEGKSAENNLYVVEGMQFDRGYISPYFVTDSEKMSVEYDNCKLLLVDKKVTNARDLVGVLEDAIRGGYPILIIAEDIEQEALATLVVNKLRGTLKIAALKAPGFGERKSQYLDDIAILTGATVIREEVGLSLDKAGKEVLGNASKVVLTKEMTTIVGDGTTQEAVNKRVVQIRNLIEQAEQDYEKEKLNERIAKLSGGVAVIQVGAQTETELKEKKLRVEDALNATKAAVEEGIVVGGGCTLLRLASKVDAIKDTLENDEEKVGAEIVKRALSYPLKLIAKNAGVNGSVVSEKVLANDNVKFGYNAATGKYEDLMAAGIIDPTKVVRCCLEHAASVAKTFLMSDCVVVEIPEPEPVPAGNPMDNSGYGY.

The transit peptide at 1–50 (MASTFTATSSLGSLLAPNAIKLSSATSISSSSFGRRHNVCVRRSRPAIVC) directs the protein to the chloroplast. Phosphoserine occurs at positions 97 and 474. Residues 388–489 (TQEAVNKRVV…KDTLENDEEK (102 aa)) are a coiled coil.

The protein belongs to the chaperonin (HSP60) family. Part of the Cpn60 complex composed of 7 alpha and 7 beta subunits. Can also form a complex composed of 14 beta subunits only. Both complexes show ATPase activity. The Cpn60 complex interacts with the Cpn10 complex. Interacts with RAB during heat stress.

Its subcellular location is the plastid. It is found in the chloroplast stroma. Its function is as follows. Involved in protein assisted folding. The protein is Chaperonin 60 subunit beta 2, chloroplastic (CPN60B2) of Arabidopsis thaliana (Mouse-ear cress).